The following is a 199-amino-acid chain: Recombination protein RecR (199 aa).

The C4-type zinc-finger motif lies at cysteine 57–cysteine 72. The 96-residue stretch at threonine 80–proline 175 folds into the Toprim domain.

The protein belongs to the RecR family.

In terms of biological role, may play a role in DNA repair. It seems to be involved in an RecBC-independent recombinational process of DNA repair. It may act with RecF and RecO. In Methylobacillus flagellatus (strain ATCC 51484 / DSM 6875 / VKM B-1610 / KT), this protein is Recombination protein RecR.